The primary structure comprises 209 residues: Ubiquinone biosynthesis protein COQ4 homolog 2, mitochondrial (209 aa).

Residues histidine 118, aspartate 119, histidine 122, and glutamate 134 each coordinate Zn(2+).

Belongs to the COQ4 family. Component of a multi-subunit COQ enzyme complex. The cofactor is Zn(2+).

The protein resides in the mitochondrion inner membrane. The catalysed reaction is a 4-hydroxy-3-methoxy-5-(all-trans-polyprenyl)benzoate + H(+) = a 2-methoxy-6-(all-trans-polyprenyl)phenol + CO2. The protein operates within cofactor biosynthesis; ubiquinone biosynthesis. Its function is as follows. Lyase that catalyzes the C1-decarboxylation of 4-hydroxy-3-methoxy-5-(all-trans-polyprenyl)benzoic acid into 2-methoxy-6-(all-trans-polyprenyl)phenol during ubiquinone biosynthesis. The polypeptide is Ubiquinone biosynthesis protein COQ4 homolog 2, mitochondrial (Paramecium tetraurelia).